Reading from the N-terminus, the 129-residue chain is Small ribosomal subunit protein uS11 (129 aa).

Belongs to the universal ribosomal protein uS11 family. Part of the 30S ribosomal subunit. Interacts with proteins S7 and S18. Binds to IF-3.

Functionally, located on the platform of the 30S subunit, it bridges several disparate RNA helices of the 16S rRNA. Forms part of the Shine-Dalgarno cleft in the 70S ribosome. This Roseobacter denitrificans (strain ATCC 33942 / OCh 114) (Erythrobacter sp. (strain OCh 114)) protein is Small ribosomal subunit protein uS11.